Here is a 447-residue protein sequence, read N- to C-terminus: Putative short-chain fatty acid transporter (447 aa).

11 helical membrane passes run Leu17–Gly37, Met49–Val69, Val98–Val118, Tyr136–Gly156, Thr188–Ile208, Phe252–Asn272, Ile284–Ile304, Ala321–Ile341, Phe359–Ile379, Trp402–Val422, and Gly427–Leu447.

Its subcellular location is the cell inner membrane. In terms of biological role, may be responsible for the uptake of short-chain fatty acids. The chain is Putative short-chain fatty acid transporter (atoE) from Haemophilus influenzae (strain ATCC 51907 / DSM 11121 / KW20 / Rd).